The primary structure comprises 360 residues: Ribosomal RNA small subunit methyltransferase C (360 aa).

Belongs to the methyltransferase superfamily. RsmC family. Monomer.

It localises to the cytoplasm. It carries out the reaction guanosine(1207) in 16S rRNA + S-adenosyl-L-methionine = N(2)-methylguanosine(1207) in 16S rRNA + S-adenosyl-L-homocysteine + H(+). In terms of biological role, specifically methylates the guanine in position 1207 of 16S rRNA in the 30S particle. The protein is Ribosomal RNA small subunit methyltransferase C of Alteromonas mediterranea (strain DSM 17117 / CIP 110805 / LMG 28347 / Deep ecotype).